Here is a 2472-residue protein sequence, read N- to C-terminus: Spectrin alpha chain, non-erythrocytic 1 (2472 aa).

The residue at position 1 (Met1) is an N-acetylmethionine. 9 Spectrin repeats span residues 45–146 (RFQF…IKLL), 150–251 (KLVQ…QGKL), 256–358 (EVQR…ARLD), 361–465 (YRLQ…QYEQ), 468–570 (DLQL…AQLA), 574–676 (HLQQ…KLRE), 679–781 (QQQQ…QKLA), 785–888 (RLQQ…DLED), and 891–961 (QAQQ…QQVA). The residue at position 587 (Ser587) is a Phosphoserine. Lys637 carries the post-translational modification N6-acetyllysine. Lys803 is modified (N6-acetyllysine). Residues Ser924, Ser982, Ser999, Ser1029, Ser1031, and Ser1041 each carry the phosphoserine modification. One can recognise an SH3 domain in the interval 967–1026 (TGKELVLALYDYQEKSPREVTMKKGDILTLLNSTNKDWWKVEVNDRQGFVPAAYVKKLDP). The Spectrin 10 repeat unit spans residues 1096–1166 (LFREANELQQ…LESEGLMAEE (71 aa)). Tyr1176 is subject to Phosphotyrosine. 7 positions are modified to phosphoserine: Ser1190, Ser1207, Ser1217, Ser1291, Ser1306, Ser1323, and Ser1338. One copy of the Spectrin 11 repeat lies at 1233–1336 (HEVQRFHRDA…RADQRKAKLG (104 aa)). Spectrin repeat units lie at residues 1339–1441 (HDLQ…RMML) and 1446–1549 (ELQL…KLGE). N6-acetyllysine is present on Lys1519. Residues Ser1550, Ser1557, Ser1578, Ser1615, and Ser1647 each carry the phosphoserine modification. 7 Spectrin repeats span residues 1552-1656 (TLQQ…KLKE), 1659-1762 (KQQN…KLSE), 1764-1868 (HRLH…RLEE), 1871-1974 (EYQQ…KLDE), 1978-2081 (FLQF…KLLE), 2092-2194 (LFLT…LELQ), and 2206-2310 (LRQE…NLEQ). Phosphothreonine is present on Thr2020. The residue at position 2052 (Lys2052) is an N6-acetyllysine. Position 2066 is a phosphothreonine (Thr2066). 3 EF-hand domains span residues 2323–2358 (EALK…LGYD), 2366–2401 (EPDP…RETE), and 2404–2439 (KSSE…EQAD). Positions 2336, 2338, 2340, 2342, 2347, 2379, 2381, 2383, 2385, and 2390 each coordinate Ca(2+). The residue at position 2421 (Lys2421) is an N6-acetyllysine.

It belongs to the spectrin family. In terms of assembly, like erythrocyte spectrin, the spectrin-like proteins are capable of forming dimers which can further associate to tetramers. Interacts (via C-terminal spectrin repeats) with TRPC4. Interacts with CALM and EMD. Interacts with isoform 1 of ACP1. Identified in a complex with ACTN4, CASK, IQGAP1, MAGI2, NPHS1 and SPTBN1. Interacts with SHANK3 (via ANK repeats). Interacts with CLN3; this interaction regulates the fodrin localization at the plasma membrane. In terms of processing, phosphorylation of Tyr-1176 decreases sensitivity to cleavage by calpain in vitro. As to expression, expressed in the foot process layer of podocytes in the kidney glomerulus and in tubules (at protein level).

It is found in the cytoplasm. The protein localises to the cytoskeleton. Its subcellular location is the cell cortex. Functionally, fodrin, which seems to be involved in secretion, interacts with calmodulin in a calcium-dependent manner and is thus candidate for the calcium-dependent movement of the cytoskeleton at the membrane. The protein is Spectrin alpha chain, non-erythrocytic 1 (Sptan1) of Rattus norvegicus (Rat).